Reading from the N-terminus, the 366-residue chain is Chorismate synthase (366 aa).

The NADP(+) site is built by arginine 48 and arginine 54. FMN-binding positions include 129 to 131 (RSS), 241 to 242 (NA), glycine 290, 305 to 309 (KPTSS), and arginine 331.

Belongs to the chorismate synthase family. As to quaternary structure, homotetramer. It depends on FMNH2 as a cofactor.

It catalyses the reaction 5-O-(1-carboxyvinyl)-3-phosphoshikimate = chorismate + phosphate. Its pathway is metabolic intermediate biosynthesis; chorismate biosynthesis; chorismate from D-erythrose 4-phosphate and phosphoenolpyruvate: step 7/7. Its function is as follows. Catalyzes the anti-1,4-elimination of the C-3 phosphate and the C-6 proR hydrogen from 5-enolpyruvylshikimate-3-phosphate (EPSP) to yield chorismate, which is the branch point compound that serves as the starting substrate for the three terminal pathways of aromatic amino acid biosynthesis. This reaction introduces a second double bond into the aromatic ring system. In Nitrobacter hamburgensis (strain DSM 10229 / NCIMB 13809 / X14), this protein is Chorismate synthase.